A 374-amino-acid chain; its full sequence is Chaperone protein DnaJ (374 aa).

In terms of domain architecture, J spans 5-70 (DYYEVLGVAK…QKRAAYDRYG (66 aa)). The CR-type zinc-finger motif lies at 134–212 (GFDTEIRVPS…CDGVGRIRRN (79 aa)). Residues Cys-147, Cys-150, Cys-164, Cys-167, Cys-186, Cys-189, Cys-200, and Cys-203 each coordinate Zn(2+). 4 CXXCXGXG motif repeats span residues 147–154 (CDTCHGSG), 164–171 (CRTCGGSG), 186–193 (CPTCHGTG), and 200–207 (CPSCDGVG).

This sequence belongs to the DnaJ family. In terms of assembly, homodimer. Requires Zn(2+) as cofactor.

The protein resides in the cytoplasm. Participates actively in the response to hyperosmotic and heat shock by preventing the aggregation of stress-denatured proteins and by disaggregating proteins, also in an autonomous, DnaK-independent fashion. Unfolded proteins bind initially to DnaJ; upon interaction with the DnaJ-bound protein, DnaK hydrolyzes its bound ATP, resulting in the formation of a stable complex. GrpE releases ADP from DnaK; ATP binding to DnaK triggers the release of the substrate protein, thus completing the reaction cycle. Several rounds of ATP-dependent interactions between DnaJ, DnaK and GrpE are required for fully efficient folding. Also involved, together with DnaK and GrpE, in the DNA replication of plasmids through activation of initiation proteins. The protein is Chaperone protein DnaJ of Bordetella petrii (strain ATCC BAA-461 / DSM 12804 / CCUG 43448).